Consider the following 363-residue polypeptide: Phosphoserine aminotransferase (363 aa).

Residue Arg46 participates in L-glutamate binding. Pyridoxal 5'-phosphate-binding positions include 80–81 (AT), Trp106, Thr156, Asp176, and Gln199. An N6-(pyridoxal phosphate)lysine modification is found at Lys200. 241–242 (NT) provides a ligand contact to pyridoxal 5'-phosphate.

Belongs to the class-V pyridoxal-phosphate-dependent aminotransferase family. SerC subfamily. In terms of assembly, homodimer. Pyridoxal 5'-phosphate serves as cofactor.

The protein resides in the cytoplasm. It catalyses the reaction O-phospho-L-serine + 2-oxoglutarate = 3-phosphooxypyruvate + L-glutamate. It carries out the reaction 4-(phosphooxy)-L-threonine + 2-oxoglutarate = (R)-3-hydroxy-2-oxo-4-phosphooxybutanoate + L-glutamate. It functions in the pathway amino-acid biosynthesis; L-serine biosynthesis; L-serine from 3-phospho-D-glycerate: step 2/3. It participates in cofactor biosynthesis; pyridoxine 5'-phosphate biosynthesis; pyridoxine 5'-phosphate from D-erythrose 4-phosphate: step 3/5. Its function is as follows. Catalyzes the reversible conversion of 3-phosphohydroxypyruvate to phosphoserine and of 3-hydroxy-2-oxo-4-phosphonooxybutanoate to phosphohydroxythreonine. The polypeptide is Phosphoserine aminotransferase (Leptospira interrogans serogroup Icterohaemorrhagiae serovar copenhageni (strain Fiocruz L1-130)).